A 394-amino-acid polypeptide reads, in one-letter code: Phosphoglycerate kinase (394 aa).

Substrate-binding positions include 21–23, Arg36, 59–62, Arg118, and Arg151; these read DFN and HLGR. Ser183 is modified (phosphoserine). Position 201 (Lys201) interacts with ATP. Thr299 bears the Phosphothreonine mark. Residues Glu323 and 350–353 each bind ATP; that span reads GGDS.

It belongs to the phosphoglycerate kinase family. Monomer.

The protein localises to the cytoplasm. It catalyses the reaction (2R)-3-phosphoglycerate + ATP = (2R)-3-phospho-glyceroyl phosphate + ADP. It participates in carbohydrate degradation; glycolysis; pyruvate from D-glyceraldehyde 3-phosphate: step 2/5. This Geobacillus sp. (strain WCH70) protein is Phosphoglycerate kinase.